Here is a 594-residue protein sequence, read N- to C-terminus: DNA polymerase II small subunit (594 aa).

Belongs to the DNA polymerase delta/II small subunit family. Heterodimer of a large subunit and a small subunit.

It carries out the reaction DNA(n) + a 2'-deoxyribonucleoside 5'-triphosphate = DNA(n+1) + diphosphate. It catalyses the reaction Exonucleolytic cleavage in the 3'- to 5'-direction to yield nucleoside 5'-phosphates.. Possesses two activities: a DNA synthesis (polymerase) and an exonucleolytic activity that degrades single-stranded DNA in the 3' to 5' direction. Has a template-primer preference which is characteristic of a replicative DNA polymerase. This Methanocaldococcus jannaschii (strain ATCC 43067 / DSM 2661 / JAL-1 / JCM 10045 / NBRC 100440) (Methanococcus jannaschii) protein is DNA polymerase II small subunit (polB).